Reading from the N-terminus, the 372-residue chain is Cyclin-A3-2 (372 aa).

The interval 53 to 73 is disordered; sequence NQKKETQKPKRNLKPPPAKQI.

This sequence belongs to the cyclin family. Cyclin AB subfamily.

The polypeptide is Cyclin-A3-2 (CYCA3-2) (Arabidopsis thaliana (Mouse-ear cress)).